A 167-amino-acid chain; its full sequence is Peptidyl-prolyl cis-trans isomerase-like 3 (167 aa).

A PPIase cyclophilin-type domain is found at 1 to 160 (MSVTLHTTLG…EEVRIERVTV (160 aa)).

Belongs to the cyclophilin-type PPIase family. PPIL3 subfamily.

It catalyses the reaction [protein]-peptidylproline (omega=180) = [protein]-peptidylproline (omega=0). Functionally, PPIases accelerate the folding of proteins. It catalyzes the cis-trans isomerization of proline imidic peptide bonds in oligopeptides. This chain is Peptidyl-prolyl cis-trans isomerase-like 3 (cyp-10), found in Neurospora crassa (strain ATCC 24698 / 74-OR23-1A / CBS 708.71 / DSM 1257 / FGSC 987).